A 292-amino-acid chain; its full sequence is Quinolinate synthase (292 aa).

The iminosuccinate site is built by His-8 and Ser-25. A [4Fe-4S] cluster-binding site is contributed by Cys-70. Iminosuccinate contacts are provided by residues 96–98 and Ser-113; that span reads YVN. [4Fe-4S] cluster is bound at residue Cys-158. Iminosuccinate contacts are provided by residues 184-186 and Thr-201; that span reads HPE. Position 244 (Cys-244) interacts with [4Fe-4S] cluster.

Belongs to the quinolinate synthase family. Type 2 subfamily. [4Fe-4S] cluster is required as a cofactor.

It localises to the cytoplasm. The catalysed reaction is iminosuccinate + dihydroxyacetone phosphate = quinolinate + phosphate + 2 H2O + H(+). Its pathway is cofactor biosynthesis; NAD(+) biosynthesis; quinolinate from iminoaspartate: step 1/1. In terms of biological role, catalyzes the condensation of iminoaspartate with dihydroxyacetone phosphate to form quinolinate. The protein is Quinolinate synthase (nadA) of Methanopyrus kandleri (strain AV19 / DSM 6324 / JCM 9639 / NBRC 100938).